Consider the following 151-residue polypeptide: uncharacterized protein (151 aa).

The Response regulatory domain maps to 2-133; the sequence is KTLIVEDNPK…VFVEAVHYSQ (132 aa). Asp-53 is subject to 4-aspartylphosphate.

This is an uncharacterized protein from Sinorhizobium fredii (strain NBRC 101917 / NGR234).